Reading from the N-terminus, the 109-residue chain is RNA-binding protein Hfq (109 aa).

The region spanning 9–68 (DPFLNALRKEKVSVSVYLVNGIKLQGQVEAFDQFCIVLRNTVNQMVYKHAISTIVPAKSV) is the Sm domain. Positions 77 to 109 (PYHQNSNDEQDENVDDIHSDDLEIQENEGNIHE) are disordered.

It belongs to the Hfq family. As to quaternary structure, homohexamer.

Its function is as follows. RNA chaperone that binds small regulatory RNA (sRNAs) and mRNAs to facilitate mRNA translational regulation in response to envelope stress, environmental stress and changes in metabolite concentrations. Also binds with high specificity to tRNAs. The chain is RNA-binding protein Hfq from Francisella tularensis subsp. holarctica (strain FTNF002-00 / FTA).